The primary structure comprises 150 residues: Triosephosphate isomerase (150 aa).

Positions 9 and 11 each coordinate substrate. H95 acts as the Electrophile in catalysis.

Belongs to the triosephosphate isomerase family. Homodimer.

The protein resides in the cytoplasm. The enzyme catalyses D-glyceraldehyde 3-phosphate = dihydroxyacetone phosphate. The protein operates within carbohydrate biosynthesis; gluconeogenesis. Its pathway is carbohydrate degradation; glycolysis; D-glyceraldehyde 3-phosphate from glycerone phosphate: step 1/1. This is Triosephosphate isomerase (tpiA) from Mycoplasmoides pirum (Mycoplasma pirum).